Consider the following 224-residue polypeptide: MSVFGKLFGAGGGKAGKGGPTPQEAIQRLRDTEEMLSKKQEFLEKKIEQELTAAKKHGTKNKRAALQALKRKKRYEKQLAQIDGTLSTIEFQREALENANTNTEVLKNMGYAAKAMKAAHDNMDIDKVDELMQDIADQQELAEEISTAISKPVGFGEEFDEDELMAELEELEQEELDKNLLEISGPETVPLPNVPSIALPSKPAKKKEEEDDDMKELENWAGSM.

Positions 1–23 are disordered; it reads MSVFGKLFGAGGGKAGKGGPTPQ. N-acetylserine is present on S2. N6-acetyllysine is present on K6. The segment covering 8-19 has biased composition (gly residues); sequence FGAGGGKAGKGG. The stretch at 23-183 forms a coiled coil; it reads QEAIQRLRDT…EELDKNLLEI (161 aa). N6-acetyllysine is present on K114. Phosphoserine is present on residues S184 and S223. A disordered region spans residues 185-224; it reads GPETVPLPNVPSIALPSKPAKKKEEEDDDMKELENWAGSM.

It belongs to the SNF7 family. Probable core component of the endosomal sorting required for transport complex III (ESCRT-III). ESCRT-III components are thought to multimerize to form a flat lattice on the perimeter membrane of the endosome. Several assembly forms of ESCRT-III may exist that interact and act sequentially. Interacts with CHMP6 and CHMP4C. Interacts with PDCD6IP; the interaction is direct. Interacts with VPS4A; the interaction is direct. Interacts with VPS4B; the interaction is direct. Interacts with CHMP7. Interacts with CFTR; the interaction requires misfolded CFTR. Interacts with PTPN23. Interacts with CC2D1B. In terms of processing, ISGylated. Isgylation weakens its interaction with VPS4A. As to expression, widely expressed. Expressed at higher level in heart and skeletal muscle. Also expressed in brain, colon, thymus, spleen, kidney, liver, small intestine, placenta, lung and peripheral blood lymphocytes.

It is found in the cytoplasm. It localises to the cytosol. Its subcellular location is the late endosome membrane. The protein localises to the midbody. The protein resides in the nucleus envelope. Its function is as follows. Probable core component of the endosomal sorting required for transport complex III (ESCRT-III) which is involved in multivesicular bodies (MVBs) formation and sorting of endosomal cargo proteins into MVBs. MVBs contain intraluminal vesicles (ILVs) that are generated by invagination and scission from the limiting membrane of the endosome and mostly are delivered to lysosomes enabling degradation of membrane proteins, such as stimulated growth factor receptors, lysosomal enzymes and lipids. The MVB pathway appears to require the sequential function of ESCRT-O, -I,-II and -III complexes. ESCRT-III proteins mostly dissociate from the invaginating membrane before the ILV is released. The ESCRT machinery also functions in topologically equivalent membrane fission events, such as the terminal stages of cytokinesis. Together with SPAST, the ESCRT-III complex promotes nuclear envelope sealing and mitotic spindle disassembly during late anaphase. Plays a role in the endosomal sorting pathway. ESCRT-III proteins are believed to mediate the necessary vesicle extrusion and/or membrane fission activities, possibly in conjunction with the AAA ATPase VPS4. When overexpressed, membrane-assembled circular arrays of CHMP4B filaments can promote or stabilize negative curvature and outward budding. CHMP4A/B/C are required for the exosomal release of SDCBP, CD63 and syndecan. Majority of the protein exists in a folded closed conformation. In terms of biological role, (Microbial infection) The ESCRT machinery also functions in topologically equivalent membrane fission events, such as the budding of enveloped viruses (HIV-1 and other lentiviruses). Via its interaction with PDCD6IP involved in HIV-1 p6- and p9-dependent virus release. This Homo sapiens (Human) protein is Charged multivesicular body protein 4b (CHMP4B).